We begin with the raw amino-acid sequence, 104 residues long: Colipase-like protein 2 (104 aa).

A signal peptide spans 1–19; the sequence is MAFTQALVTVLAFLVGTLP. 5 disulfides stabilise this stretch: Cys-38–Cys-49, Cys-44–Cys-60, Cys-48–Cys-82, Cys-70–Cys-90, and Cys-84–Cys-101.

This sequence belongs to the colipase family.

Its subcellular location is the secreted. The chain is Colipase-like protein 2 (Clpsl2) from Rattus norvegicus (Rat).